Reading from the N-terminus, the 426-residue chain is Enolase (426 aa).

Residue Gln163 coordinates (2R)-2-phosphoglycerate. Glu205 (proton donor) is an active-site residue. Asp242, Glu283, and Asp310 together coordinate Mg(2+). Positions 335, 364, 365, and 386 each coordinate (2R)-2-phosphoglycerate. The active-site Proton acceptor is the Lys335.

The protein belongs to the enolase family. Mg(2+) is required as a cofactor.

The protein resides in the cytoplasm. The protein localises to the secreted. It is found in the cell surface. The catalysed reaction is (2R)-2-phosphoglycerate = phosphoenolpyruvate + H2O. Its pathway is carbohydrate degradation; glycolysis; pyruvate from D-glyceraldehyde 3-phosphate: step 4/5. Catalyzes the reversible conversion of 2-phosphoglycerate (2-PG) into phosphoenolpyruvate (PEP). It is essential for the degradation of carbohydrates via glycolysis. The protein is Enolase of Paenarthrobacter aurescens (strain TC1).